The following is a 385-amino-acid chain: METFDYYEILEITRTSDKETIKKAYRKMALKYHPDRNPDDKDAEEQFKRVNEAYEVLSDDSKRQIYDKYGKEGLQNSGFSGFSGRDFSDIFGDLGSIFESAFGANFGFSTQKRGGGKYNLDEIVGLELSFTEAVFGCKKEIHNSFKIACSDCKGTGAKGGKLNTCKDCGGKGQVYMRQGFMTFAQTCPTCKGEGQSASEKCSKCKGSGFEISEESFEVSIPEGIDDGNRIRIGGRGNADKNGSRGDLYIAVSVAEDENFVRDGENVYIEVPVFFTSIVLGTTLKIPSLRGELELKIPPNTRDKEQFVFDNEGIKDVNSAYRGKFVAQIKITYPPKLNAEQRALTEKLQESFGIESEPYKNVFEECFTKVKQWLHKHSKNDKDTTK.

Residues 5 to 70 (DYYEILEITR…SKRQIYDKYG (66 aa)) form the J domain. Residues 136–213 (GCKKEIHNSF…CKGSGFEISE (78 aa)) form a CR-type zinc finger. Zn(2+)-binding residues include cysteine 149, cysteine 152, cysteine 165, cysteine 168, cysteine 187, cysteine 190, cysteine 201, and cysteine 204. CXXCXGXG motif repeat units lie at residues 149 to 156 (CSDCKGTG), 165 to 172 (CKDCGGKG), 187 to 194 (CPTCKGEG), and 201 to 208 (CSKCKGSG).

Belongs to the DnaJ family. Homodimer. Requires Zn(2+) as cofactor.

It localises to the cytoplasm. In terms of biological role, participates actively in the response to hyperosmotic and heat shock by preventing the aggregation of stress-denatured proteins and by disaggregating proteins, also in an autonomous, DnaK-independent fashion. Unfolded proteins bind initially to DnaJ; upon interaction with the DnaJ-bound protein, DnaK hydrolyzes its bound ATP, resulting in the formation of a stable complex. GrpE releases ADP from DnaK; ATP binding to DnaK triggers the release of the substrate protein, thus completing the reaction cycle. Several rounds of ATP-dependent interactions between DnaJ, DnaK and GrpE are required for fully efficient folding. Also involved, together with DnaK and GrpE, in the DNA replication of plasmids through activation of initiation proteins. This Helicobacter hepaticus (strain ATCC 51449 / 3B1) protein is Chaperone protein DnaJ.